Reading from the N-terminus, the 144-residue chain is Major allergen Blo t 12 (144 aa).

Positions 1-20 (MKSVLIFLVAIALFSANIVS) are cleaved as a signal peptide. Residues 24-77 (QTTRGRHTEPDDHHEKPTTQCTHEETTSTQHHHEEVVTTQTPHHEEKTTTEETH) are disordered. The region spanning 92 to 144 (HVVCHEEGPIHIQEMCNKYIICSKSGSLWYITVMPCSIGTKFDPISRNCVLDN) is the Chitin-binding type-2 domain. A disulfide bridge links Cys-127 with Cys-140.

The protein is Major allergen Blo t 12 of Blomia tropicalis (Mite).